A 202-amino-acid chain; its full sequence is Protein EMBRYO DEFECTIVE 514 (202 aa).

2 disordered regions span residues 1–69 and 168–202; these read MAEE…PVKL and MKTP…RFRR. Residue Ala2 is modified to N-acetylalanine. Basic and acidic residues-rich tracts occupy residues 33–42 and 51–65; these read ETGDEKRERE and GESK…EKSG. Residues 174–202 show a composition bias toward gly residues; the sequence is NGNGHGGGRGGGGGRRGGRGGGRGGRFRR.

In terms of tissue distribution, expressed in leaves, flowers and embryos at globular stage.

It localises to the nucleus. Functionally, may play a role in ribosome biogenesis and in determining the rate of cell division. Involved in a process essential for nuclear and nucleolar functions. In Arabidopsis thaliana (Mouse-ear cress), this protein is Protein EMBRYO DEFECTIVE 514.